Consider the following 2140-residue polypeptide: Dedicator of cytokinesis protein 7 (2140 aa).

A phosphoserine mark is found at Ser-30, Ser-180, and Ser-182. The tract at residues 138–183 (FNPNTLDKQKERQKGLPKQVFESDEAPDGNSYQDDQDDLKRRSMSI) is disordered. The stretch at 365–395 (FKEADATKNKEKLEKLKSQADQFCQRLGKYR) forms a coiled coil. Lys-381 bears the N6-methyllysine mark. Thr-450 carries the phosphothreonine modification. A Phosphoserine modification is found at Ser-452. One can recognise a C2 DOCK-type domain in the interval 561–727 (RNLLYIYPQS…GVFNVEVVAV (167 aa)). Residues Ser-862, Ser-864, Ser-882, Ser-888, Ser-896, Ser-900, and Ser-905 each carry the phosphoserine modification. Over residues 888-901 (SLNLNRSRSLSNSN) the composition is skewed to low complexity. Residues 888–971 (SLNLNRSRSL…MSSHTETSSF (84 aa)) are disordered. Phosphothreonine is present on residues Thr-907 and Thr-909. 14 positions are modified to phosphoserine: Ser-910, Ser-929, Ser-964, Ser-1383, Lys-1390, Ala-1394, Glu-1398, Tyr-1421, Ser-1425, Arg-1429, Ser-1430, Ser-1432, Ser-1434, and Ser-1438. Positions 943-971 (SNPSPSAESTQAMDRSCNRMSSHTETSSF) are enriched in polar residues. Residues 1678 to 2114 (KGYQTSPDLR…LQPLINRKIP (437 aa)) form the DOCKER domain. Lys-1962 is modified (N6-acetyllysine). Residues 2086 to 2112 (DQKEYQRELERNYHRLKEALQPLINRK) adopt a coiled-coil conformation. Ser-2129 carries the post-translational modification Phosphoserine.

It belongs to the DOCK family. Component of the DOCK7-induced septin displacement/DISP complex, at least composed of DOCK7, LRCH3 and MYO6. Interacts with TSC1. Interacts with nucleotide-free RAC1 and RAC3. Interacts with TACC3 and CRY1. Interacts with NOD2. Widely expressed.

The protein localises to the cell projection. The protein resides in the axon. Its function is as follows. Functions as a guanine nucleotide exchange factor (GEF), which activates Rac1 and Rac3 Rho small GTPases by exchanging bound GDP for free GTP. Does not have a GEF activity for CDC42. Required for STMN1 'Ser-15' phosphorylation during axon formation and consequently for neuronal polarization. As part of the DISP complex, may regulate the association of septins with actin and thereby regulate the actin cytoskeleton. Has a role in pigmentation. Involved in the regulation of cortical neurogenesis through the control of radial glial cells (RGCs) proliferation versus differentiation; negatively regulates the basal-to-apical interkinetic nuclear migration of RGCs by antagonizing the microtubule growth-promoting function of TACC3. The polypeptide is Dedicator of cytokinesis protein 7 (DOCK7) (Homo sapiens (Human)).